Consider the following 123-residue polypeptide: Class I hydrophobin 2 (123 aa).

The signal sequence occupies residues 1-16 (MYAYTVIAFLAASVAA). 4 disulfides stabilise this stretch: Cys-35-Cys-97, Cys-43-Cys-91, Cys-44-Cys-72, and Cys-98-Cys-116.

The protein belongs to the fungal hydrophobin family.

It localises to the secreted. It is found in the cell wall. In terms of biological role, aerial growth, conidiation, and dispersal of filamentous fungi in the environment rely upon a capability of their secreting small amphipathic proteins called hydrophobins (HPBs) with low sequence identity. Class I can self-assemble into an outermost layer of rodlet bundles on aerial cell surfaces, conferring cellular hydrophobicity that supports fungal growth, development and dispersal; whereas Class II form highly ordered films at water-air interfaces through intermolecular interactions but contribute nothing to the rodlet structure. HYD1 and HYD2 are required for the structural integrity of the long aerial chains of microconidia. Does not seem to be important for the ability to cause seedling disease. The protein is Class I hydrophobin 2 of Gibberella moniliformis (Maize ear and stalk rot fungus).